Reading from the N-terminus, the 282-residue chain is MSSYENHQALDGLTLGKSTDYRDNYDASLLQGVPRSLNRDPLGLTADNLPFHGADIWTLYELSWLNSRGLPQVAVGHVELDYTSVNLIESKSFKLYLNSFNQTRFDTWETVRQTLERDLRACAQGNVSVRLHRLDELEGQPVAHFHGTCIDDQDISIDNYQFTTDYLQHAVSGEKQVEETLVSHLLKSNCLITHQPDWGSIQIQYRGRKIDREKLLRYLVSFRHHNEFHEQCVERIFNDILRFCQPETLSVYARYTRRGGLDINPWRSNADFVPATGRLARQ.

88–90 (IES) contacts substrate. 90 to 91 (SK) serves as a coordination point for NADPH. C190 (thioimide intermediate) is an active-site residue. D197 serves as the catalytic Proton donor. 229–230 (HE) provides a ligand contact to substrate. 258 to 259 (RG) serves as a coordination point for NADPH.

The protein belongs to the GTP cyclohydrolase I family. QueF type 2 subfamily. In terms of assembly, homodimer.

Its subcellular location is the cytoplasm. It catalyses the reaction 7-aminomethyl-7-carbaguanine + 2 NADP(+) = 7-cyano-7-deazaguanine + 2 NADPH + 3 H(+). It participates in tRNA modification; tRNA-queuosine biosynthesis. In terms of biological role, catalyzes the NADPH-dependent reduction of 7-cyano-7-deazaguanine (preQ0) to 7-aminomethyl-7-deazaguanine (preQ1). This is NADPH-dependent 7-cyano-7-deazaguanine reductase from Salmonella schwarzengrund (strain CVM19633).